The primary structure comprises 408 residues: Aminoacylase-1 (408 aa).

Zn(2+) is bound at residue histidine 80. The active site involves aspartate 82. Zn(2+) is bound at residue aspartate 113. The active-site Proton acceptor is the glutamate 147. The Zn(2+) site is built by glutamate 148, glutamate 175, and histidine 373.

Belongs to the peptidase M20A family. In terms of assembly, homodimer. Interacts with SPHK1. The cofactor is Zn(2+).

It is found in the cytoplasm. The catalysed reaction is an N-acyl-L-amino acid + H2O = an L-alpha-amino acid + a carboxylate. It carries out the reaction N-acetyl-L-methionine + H2O = L-methionine + acetate. It catalyses the reaction N-acetyl-L-glutamine + H2O = L-glutamine + acetate. In terms of biological role, catalyzes the hydrolysis of N-acetylated amino acids to acetate and free amino acids. In Pongo abelii (Sumatran orangutan), this protein is Aminoacylase-1 (ACY1).